The primary structure comprises 486 residues: ATP synthase subunit beta (486 aa).

ATP is bound at residue Gly-170 to Thr-177.

The protein belongs to the ATPase alpha/beta chains family. As to quaternary structure, F-type ATPases have 2 components, CF(1) - the catalytic core - and CF(0) - the membrane proton channel. CF(1) has five subunits: alpha(3), beta(3), gamma(1), delta(1), epsilon(1). CF(0) has three main subunits: a(1), b(2) and c(9-12). The alpha and beta chains form an alternating ring which encloses part of the gamma chain. CF(1) is attached to CF(0) by a central stalk formed by the gamma and epsilon chains, while a peripheral stalk is formed by the delta and b chains.

Its subcellular location is the cell membrane. The catalysed reaction is ATP + H2O + 4 H(+)(in) = ADP + phosphate + 5 H(+)(out). Its function is as follows. Produces ATP from ADP in the presence of a proton gradient across the membrane. The catalytic sites are hosted primarily by the beta subunits. The polypeptide is ATP synthase subunit beta (Clavibacter michiganensis subsp. michiganensis (strain NCPPB 382)).